Here is a 131-residue protein sequence, read N- to C-terminus: MSIQYTTVGDLKVGNYVVIDGEPCRVVEISKAKTGKHGSAKANIVAIGLFTGQKRTLMAPVDQQVEVPIIEKHIGQILADKGDTITIMDMENYETFDIEKPTDADIVDKIRPGAEVEYWEIMGRKKIVRVK.

At Lys-36 the chain carries Hypusine.

It belongs to the eIF-5A family.

The protein resides in the cytoplasm. Functions by promoting the formation of the first peptide bond. The sequence is that of Translation initiation factor 5A from Sulfurisphaera tokodaii (strain DSM 16993 / JCM 10545 / NBRC 100140 / 7) (Sulfolobus tokodaii).